Consider the following 340-residue polypeptide: TD and POZ domain-containing protein 5 (340 aa).

An MATH domain is found at 19–149 (EFCYVWTIRN…ENKLTLCCKV (131 aa)). The BTB domain maps to 188 to 255 (TDCCLLVAGH…IYTGKAPHLQ (68 aa)).

It belongs to the Tdpoz family.

The chain is TD and POZ domain-containing protein 5 from Mus musculus (Mouse).